Here is a 210-residue protein sequence, read N- to C-terminus: Scoloptoxin SSD558 (210 aa).

A signal peptide spans 1–23; the sequence is MNILLPSTLFVLLMFQIIGSGMG.

Contains 3 disulfide bonds. Expressed by the venom gland.

The protein localises to the secreted. The chain is Scoloptoxin SSD558 from Scolopendra dehaani (Thai centipede).